The sequence spans 389 residues: Flavin-dependent monooxygenase (389 aa).

FAD is bound by residues Ala-12–Ala-15, Glu-34–Lys-35, Gln-44, Arg-105, Tyr-267, and Asp-289.

Belongs to the aromatic-ring hydroxylase family. The cofactor is FAD.

The enzyme catalyses a tetracycline + NADPH + O2 + H(+) = a (1S,10aS)-3-(CONH2)-1-(Me2N)-3,3a,4,6-(HO)4-2,5-dioxo-1H,10aH,11H,11aH-cyclopenta[b]anthracene + CO + NADP(+) + H2O. It carries out the reaction 7-chlorotetracycline + NADPH + O2 + H(+) = (1S,10S,10aS)-3-(CONH2)-9-Cl-1-(Me2N)-3,3a,4,10-(HO)4-10-Me-2,5-dioxo-1H,10aH,11H,11aH-cyclopenta[b]anthracen-6-olate + CO + NADP(+) + H2O. Inhibited by anhydrotetracycline. Its function is as follows. An FAD-requiring monooxygenase active on tetracycline antibiotic and some of its derivatives, which leads to their inactivation. Expression in E.coli confers high resistance to tetracycline and oxytetracycline, does not confer resistance to minocycline or tigecycline. The reaction requires NADPH. Expression in L.pneumophila confers resistance to tetracycline. Degrades and confers resistance to tetracycline and chlortetracycline. This Legionella longbeachae serogroup 1 (strain NSW150) protein is Flavin-dependent monooxygenase (tet(56)).